The sequence spans 729 residues: Pentatricopeptide repeat-containing protein At5g01110 (729 aa).

Residues 26-45 (TSSSPVFEPSSSSSSSSSSA) are disordered. The segment covering 27-45 (SSSPVFEPSSSSSSSSSSA) has biased composition (low complexity). PPR repeat units lie at residues 112-147 (TSLSLSAMIHILVRSGRLSDAQSCLLRMIRRSGVSR), 164-198 (NDSVFDLLIRTYVQARKLREAHEAFTLLRSKGFTV), 199-233 (SIDACNALIGSLVRIGWVELAWGVYQEISRSGVGI), 234-268 (NVYTLNIMVNALCKDGKMEKVGTFLSQVQEKGVYP), 269-303 (DIVTYNTLISAYSSKGLMEEAFELMNAMPGKGFSP), 304-338 (GVYTYNTVINGLCKHGKYERAKEVFAEMLRSGLSP), 339-373 (DSTTYRSLLMEACKKGDVVETEKVFSDMRSRDVVP), 374-408 (DLVCFSSMMSLFTRSGNLDKALMYFNSVKEAGLIP), 409-443 (DNVIYTILIQGYCRKGMISVAMNLRNEMLQQGCAM), 444-478 (DVVTYNTILHGLCKRKMLGEADKLFNEMTERALFP), 479-513 (DSYTLTILIDGHCKLGNLQNAMELFQKMKEKRIRL), 514-548 (DVVTYNTLLDGFGKVGDIDTAKEIWADMVSKEILP), 549-583 (TPISYSILVNALCSKGHLAEAFRVWDEMISKNIKP), 584-618 (TVMICNSMIKGYCRSGNASDGESFLEKMISEGFVP), 619-649 (DCISYNTLIYGFVREENMSKAFGLVKKMEEE), 656-690 (DVFTYNSILHGFCRQNQMKEAEVVLRKMIERGVNP), and 691-725 (DRSTYTCMINGFVSQDNLTEAFRIHDEMLQRGFSP).

This sequence belongs to the PPR family. P subfamily.

This chain is Pentatricopeptide repeat-containing protein At5g01110, found in Arabidopsis thaliana (Mouse-ear cress).